The chain runs to 821 residues: Kinetochore protein SLK19 (821 aa).

2 disordered regions span residues 1-52 (MNEV…SQFV) and 99-153 (FDDK…NDKE). Thr7 carries the post-translational modification Phosphothreonine; by CDC28. Residues 15–51 (QAQQREQNSENCSQERNPRTFNSEPDSSFNSPGSSQF) are compositionally biased toward polar residues. Composition is skewed to basic and acidic residues over residues 99 to 122 (FDDK…DKHV) and 136 to 153 (SSEK…NDKE). Phosphoserine is present on residues Ser188 and Ser189. Ser201 is modified (phosphoserine; by CDC28). Ser216 carries the post-translational modification Phosphoserine. Phosphothreonine is present on Thr273. Disordered regions lie at residues 274 to 298 (PLYE…DDNQ) and 699 to 720 (EQNN…RDDE). Ser283 carries the phosphoserine modification. The stretch at 310-821 (AKRNEELTDQ…LLKLLENEKK (512 aa)) forms a coiled coil.

In terms of processing, cleaved by ESP1 at the onset of anaphase. Post-translationally, phosphorylated by CDC5/Polo-like kinase at the onset of anaphase. Phosphorylation takes places at proximity to cleavage sites and is required for an efficient cleavage by ESP1. Phosphorylated also by CDC28.

It localises to the chromosome. The protein resides in the centromere. The protein localises to the kinetochore. Its subcellular location is the cytoplasm. It is found in the cytoskeleton. It localises to the microtubule organizing center. The protein resides in the spindle pole body. Has a role in spindle assembly and stability. Required to ensure a timely exit form mitosis. Essential to maintain pre-anaphase spindle polarity. Associates to the plus ends of the microtubules at the kinetochore and spindle midzone. A component of the FEAR (CDC14 Early Anaphase Release) network which promotes CDC14 release from the nucleolus during early anaphase. Required for proper chromosome segregation during meiosis I where it prevents premature sister chromatid separation. The protein is Kinetochore protein SLK19 (SLK19) of Saccharomyces cerevisiae (strain ATCC 204508 / S288c) (Baker's yeast).